Here is a 240-residue protein sequence, read N- to C-terminus: tRNA (guanine-N(7)-)-methyltransferase (240 aa).

Positions 1-20 (MTESHDTPITSDGEARPHRR) are disordered. Positions 70, 95, 122, and 145 each coordinate S-adenosyl-L-methionine. D145 is an active-site residue. Substrate is bound by residues K149, D181, and 218-221 (TKFE).

It belongs to the class I-like SAM-binding methyltransferase superfamily. TrmB family.

The catalysed reaction is guanosine(46) in tRNA + S-adenosyl-L-methionine = N(7)-methylguanosine(46) in tRNA + S-adenosyl-L-homocysteine. It functions in the pathway tRNA modification; N(7)-methylguanine-tRNA biosynthesis. Catalyzes the formation of N(7)-methylguanine at position 46 (m7G46) in tRNA. The chain is tRNA (guanine-N(7)-)-methyltransferase from Pseudomonas putida (strain ATCC 700007 / DSM 6899 / JCM 31910 / BCRC 17059 / LMG 24140 / F1).